A 184-amino-acid polypeptide reads, in one-letter code: Peptide deformylase (184 aa).

Residues Cys-111 and His-154 each contribute to the Fe cation site. The active site involves Glu-155. Residue His-158 coordinates Fe cation.

The protein belongs to the polypeptide deformylase family. It depends on Fe(2+) as a cofactor.

The catalysed reaction is N-terminal N-formyl-L-methionyl-[peptide] + H2O = N-terminal L-methionyl-[peptide] + formate. Its function is as follows. Removes the formyl group from the N-terminal Met of newly synthesized proteins. Requires at least a dipeptide for an efficient rate of reaction. N-terminal L-methionine is a prerequisite for activity but the enzyme has broad specificity at other positions. The protein is Peptide deformylase of Lactobacillus helveticus (strain DPC 4571).